The chain runs to 350 residues: S-adenosylmethionine:tRNA ribosyltransferase-isomerase (350 aa).

This sequence belongs to the QueA family. In terms of assembly, monomer.

The protein localises to the cytoplasm. It catalyses the reaction 7-aminomethyl-7-carbaguanosine(34) in tRNA + S-adenosyl-L-methionine = epoxyqueuosine(34) in tRNA + adenine + L-methionine + 2 H(+). It functions in the pathway tRNA modification; tRNA-queuosine biosynthesis. Functionally, transfers and isomerizes the ribose moiety from AdoMet to the 7-aminomethyl group of 7-deazaguanine (preQ1-tRNA) to give epoxyqueuosine (oQ-tRNA). The protein is S-adenosylmethionine:tRNA ribosyltransferase-isomerase of Bacillus mycoides (strain KBAB4) (Bacillus weihenstephanensis).